The following is a 131-amino-acid chain: Snaclec A13 (131 aa).

3 cysteine pairs are disulfide-bonded: C4-C15, C32-C125, and C100-C117. The C-type lectin domain maps to Y11 to M126.

It belongs to the snaclec family. As to quaternary structure, heterodimer; disulfide-linked. As to expression, expressed by the venom gland.

It is found in the secreted. In terms of biological role, interferes with one step of hemostasis (modulation of platelet aggregation, or coagulation cascade, for example). The polypeptide is Snaclec A13 (Macrovipera lebetinus (Levantine viper)).